A 275-amino-acid polypeptide reads, in one-letter code: 2,3,4,5-tetrahydropyridine-2,6-dicarboxylate N-succinyltransferase (275 aa).

Substrate contacts are provided by Arg105 and Asp142.

It belongs to the transferase hexapeptide repeat family. As to quaternary structure, homotrimer.

The protein resides in the cytoplasm. It carries out the reaction (S)-2,3,4,5-tetrahydrodipicolinate + succinyl-CoA + H2O = (S)-2-succinylamino-6-oxoheptanedioate + CoA. Its pathway is amino-acid biosynthesis; L-lysine biosynthesis via DAP pathway; LL-2,6-diaminopimelate from (S)-tetrahydrodipicolinate (succinylase route): step 1/3. This Pectobacterium atrosepticum (strain SCRI 1043 / ATCC BAA-672) (Erwinia carotovora subsp. atroseptica) protein is 2,3,4,5-tetrahydropyridine-2,6-dicarboxylate N-succinyltransferase.